We begin with the raw amino-acid sequence, 356 residues long: 3'-5' exonuclease (356 aa).

The segment at 1–120 (MDKYLIKMPT…TPSPEKEKPE (120 aa)) is disordered. Composition is skewed to basic and acidic residues over residues 29 to 56 (TIDKQKEKNTPTEKQKQEDDYVEKENTP) and 71 to 85 (KNQDTPTEVKDIKNE). The span at 99–113 (LTRSTRSMAEEGTPS) shows a compositional bias: low complexity. 2 positions are modified to phosphoserine: Ser-105 and Ser-113. The 3'-5' exonuclease domain occupies 155–316 (TTLDVVPMAF…GQVIYRDLEQ (162 aa)). Residues Asp-165, Glu-167, and Asp-303 each coordinate Mg(2+).

The protein belongs to the WRNexo family.

It localises to the nucleus. In terms of biological role, has exonuclease activity on both single-stranded and duplex templates bearing overhangs, but not blunt ended duplex DNA, and cleaves in a 3'-5' direction. Essential for the formation of DNA replication focal centers. Has an important role in maintaining genome stability. This Drosophila willistoni (Fruit fly) protein is 3'-5' exonuclease.